We begin with the raw amino-acid sequence, 353 residues long: Protein MGF 360-9L (353 aa).

Belongs to the asfivirus MGF 360 family. As to quaternary structure, interacts with host STAT1; this interaction mediates STAT1 degradation through apoptosis. Interacts with host STAT2; this interaction mediates STAT2 degradation through the proteasome.

It is found in the host cytoplasm. Plays a role in virus cell tropism, and may be required for efficient virus replication in macrophages. In addition, inhibits IFN-beta-induced IFN-stimulated genes (ISGs) transcription. Mechanistically, degrades host STAT1 and STAT2 through apoptosis and ubiquitin-proteasome pathways respectively. The polypeptide is Protein MGF 360-9L (African swine fever virus (isolate Tick/Malawi/Lil 20-1/1983) (ASFV)).